Reading from the N-terminus, the 691-residue chain is Elongation factor G (691 aa).

Residues 12–286 (KKLRNIGIMA…GILEYLPSPL (275 aa)) form the tr-type G domain. Residues 21-28 (AHIDAGKT), 85-89 (DTPGH), and 139-142 (NKMD) each bind GTP.

Belongs to the TRAFAC class translation factor GTPase superfamily. Classic translation factor GTPase family. EF-G/EF-2 subfamily.

It is found in the cytoplasm. Its function is as follows. Catalyzes the GTP-dependent ribosomal translocation step during translation elongation. During this step, the ribosome changes from the pre-translocational (PRE) to the post-translocational (POST) state as the newly formed A-site-bound peptidyl-tRNA and P-site-bound deacylated tRNA move to the P and E sites, respectively. Catalyzes the coordinated movement of the two tRNA molecules, the mRNA and conformational changes in the ribosome. This Thermosipho africanus (strain TCF52B) protein is Elongation factor G.